A 330-amino-acid polypeptide reads, in one-letter code: Zinc finger protein sdz-12 (330 aa).

5 consecutive C2H2-type zinc fingers follow at residues 27 to 48 (PQCQ…HMKH), 63 to 85 (FRCE…QITH), 91 to 113 (KKCS…LHNH), 120 to 144 (FDCP…LVNH), and 153 to 176 (APCG…HFDH). The segment covering 183–195 (SAPAPTSSARLSP) has biased composition (low complexity). Positions 183–203 (SAPAPTSSARLSPITVSTSGS) are disordered. The C2H2-type 6 zinc finger occupies 271-293 (FECKHCTIKFHDATMSIMHNALH).

This sequence belongs to the krueppel C2H2-type zinc-finger protein family. As to expression, expressed in the somatic gonad.

In terms of biological role, together with ehn-3, may play a role in gonadogenesis. This Caenorhabditis elegans protein is Zinc finger protein sdz-12.